The chain runs to 382 residues: Opsin Rh5 (382 aa).

The Extracellular segment spans residues 1–49; the sequence is MHINGPSGPQAYVNDSLGDGSVFPMGHGYPAEYQHMVHAHWRGFREAPI. An N-linked (GlcNAc...) asparagine glycan is attached at Asn-14. The chain crosses the membrane as a helical span at residues 50 to 76; the sequence is YYHAGFYIAFIVLMLSSIFGNGLVIWI. Residues 77–88 lie on the Cytoplasmic side of the membrane; sequence FSTSKSLRTPSN. Residues 89-112 form a helical membrane-spanning segment; sequence LLILNLAIFDLFMCTNMPHYLINA. Residues 113-127 lie on the Extracellular side of the membrane; sequence TVGYIVGGDLGCDIY. An intrachain disulfide couples Cys-124 to Cys-201. Residues 128-147 form a helical membrane-spanning segment; the sequence is ALNGGISGMGASITNAFIAF. At 148-165 the chain is on the cytoplasmic side; sequence DRYKTISNPIDGRLSYGQ. Residues 166–190 traverse the membrane as a helical segment; it reads IVLLILFTWLWATPFSVLPLFQIWG. The Extracellular segment spans residues 191–214; sequence RYQPEGFLTTCSFDYLTNTDENRL. The chain crosses the membrane as a helical span at residues 215–242; it reads FVRTIFVWSYVIPMTMILVSYYKLFTHV. Over 243–278 the chain is Cytoplasmic; that stretch reads RVHEKMLAEQAKKMNVKSLSANANADNMSVELRIAK. A helical membrane pass occupies residues 279–302; it reads AALIIYMLFILAWTPYSVVALIGC. Residues 303–310 lie on the Extracellular side of the membrane; the sequence is FGEQQLIT. A helical transmembrane segment spans residues 311–335; sequence PFVSMLPCLACKSVSCLDPWVYATS. Residue Lys-322 is modified to N6-(retinylidene)lysine. The Cytoplasmic segment spans residues 336–382; sequence HPKYRLELERRLPWLGIREKHATSGTSGGQESVASVSGDTLALSVQN. A disordered region spans residues 357-382; the sequence is ATSGTSGGQESVASVSGDTLALSVQN. Residues 358–382 show a composition bias toward polar residues; it reads TSGTSGGQESVASVSGDTLALSVQN.

Belongs to the G-protein coupled receptor 1 family. Opsin subfamily. Post-translationally, phosphorylated on some or all of the serine and threonine residues present in the C-terminal region. Expressed specifically in the retina. Each Drosophila eye is composed of 800 facets or ommatidia. Each ommatidium contains 8 photoreceptor cells (R1-R8), the R1 to R6 cells are outer cells, while R7 and R8 are inner cells. Rh5 is expressed only in R8 photoreceptor cells in a subset of ommatidia.

It is found in the cell projection. Its subcellular location is the rhabdomere membrane. Visual pigments are the light-absorbing molecules that mediate vision. They consist of an apoprotein, opsin, covalently linked to cis-retinal. The protein is Opsin Rh5 (Rh5) of Drosophila melanogaster (Fruit fly).